The following is a 176-amino-acid chain: 3-hydroxydecanoyl-[acyl-carrier-protein] dehydratase (176 aa).

His71 is a catalytic residue.

It belongs to the thioester dehydratase family. FabA subfamily. Homodimer.

The protein resides in the cytoplasm. It catalyses the reaction a (3R)-hydroxyacyl-[ACP] = a (2E)-enoyl-[ACP] + H2O. The enzyme catalyses (3R)-hydroxydecanoyl-[ACP] = (2E)-decenoyl-[ACP] + H2O. It carries out the reaction (2E)-decenoyl-[ACP] = (3Z)-decenoyl-[ACP]. It functions in the pathway lipid metabolism; fatty acid biosynthesis. In terms of biological role, necessary for the introduction of cis unsaturation into fatty acids. Catalyzes the dehydration of (3R)-3-hydroxydecanoyl-ACP to E-(2)-decenoyl-ACP and then its isomerization to Z-(3)-decenoyl-ACP. Can catalyze the dehydratase reaction for beta-hydroxyacyl-ACPs with saturated chain lengths up to 16:0, being most active on intermediate chain length. The chain is 3-hydroxydecanoyl-[acyl-carrier-protein] dehydratase from Afipia carboxidovorans (strain ATCC 49405 / DSM 1227 / KCTC 32145 / OM5) (Oligotropha carboxidovorans).